The primary structure comprises 215 residues: Ribosomal RNA small subunit methyltransferase G (215 aa).

Residues G77, F82, 130-131 (IE), and R146 each bind S-adenosyl-L-methionine.

This sequence belongs to the methyltransferase superfamily. RNA methyltransferase RsmG family.

Its subcellular location is the cytoplasm. It catalyses the reaction guanosine(527) in 16S rRNA + S-adenosyl-L-methionine = N(7)-methylguanosine(527) in 16S rRNA + S-adenosyl-L-homocysteine. In terms of biological role, specifically methylates the N7 position of guanine in position 527 of 16S rRNA. In Bartonella bacilliformis (strain ATCC 35685 / KC583 / Herrer 020/F12,63), this protein is Ribosomal RNA small subunit methyltransferase G.